The primary structure comprises 212 residues: FMN-dependent NADH:quinone oxidoreductase (212 aa).

Residues serine 10 and serine 17–serine 19 contribute to the FMN site.

Belongs to the azoreductase type 1 family. Homodimer. FMN is required as a cofactor.

The catalysed reaction is 2 a quinone + NADH + H(+) = 2 a 1,4-benzosemiquinone + NAD(+). The enzyme catalyses N,N-dimethyl-1,4-phenylenediamine + anthranilate + 2 NAD(+) = 2-(4-dimethylaminophenyl)diazenylbenzoate + 2 NADH + 2 H(+). In terms of biological role, quinone reductase that provides resistance to thiol-specific stress caused by electrophilic quinones. Functionally, also exhibits azoreductase activity. Catalyzes the reductive cleavage of the azo bond in aromatic azo compounds to the corresponding amines. The protein is FMN-dependent NADH:quinone oxidoreductase of Malacoplasma penetrans (strain HF-2) (Mycoplasma penetrans).